A 645-amino-acid chain; its full sequence is Mediator of RNA polymerase II transcription subunit 17 (645 aa).

It belongs to the Mediator complex subunit 17 family. Component of the Mediator complex.

Its subcellular location is the nucleus. Component of the Mediator complex, a coactivator involved in the regulated transcription of nearly all RNA polymerase II-dependent genes. Mediator functions as a bridge to convey information from gene-specific regulatory proteins to the basal RNA polymerase II transcription machinery. Mediator is recruited to promoters by direct interactions with regulatory proteins and serves as a scaffold for the assembly of a functional preinitiation complex with RNA polymerase II and the general transcription factors. In Aedes aegypti (Yellowfever mosquito), this protein is Mediator of RNA polymerase II transcription subunit 17 (MED17).